The chain runs to 221 residues: Uracil-DNA glycosylase (221 aa).

The Proton acceptor role is filled by Asp-63.

It belongs to the uracil-DNA glycosylase (UDG) superfamily. UNG family.

The protein resides in the cytoplasm. The catalysed reaction is Hydrolyzes single-stranded DNA or mismatched double-stranded DNA and polynucleotides, releasing free uracil.. Excises uracil residues from the DNA which can arise as a result of misincorporation of dUMP residues by DNA polymerase or due to deamination of cytosine. This chain is Uracil-DNA glycosylase, found in Blochmanniella floridana.